The primary structure comprises 172 residues: ATP synthase subunit b (172 aa).

Residues 11–30 (LIAQIINFVIVLWVLNRFAF) form a helical membrane-spanning segment.

The protein belongs to the ATPase B chain family. F-type ATPases have 2 components, F(1) - the catalytic core - and F(0) - the membrane proton channel. F(1) has five subunits: alpha(3), beta(3), gamma(1), delta(1), epsilon(1). F(0) has three main subunits: a(1), b(2) and c(10-14). The alpha and beta chains form an alternating ring which encloses part of the gamma chain. F(1) is attached to F(0) by a central stalk formed by the gamma and epsilon chains, while a peripheral stalk is formed by the delta and b chains.

The protein localises to the cell inner membrane. F(1)F(0) ATP synthase produces ATP from ADP in the presence of a proton or sodium gradient. F-type ATPases consist of two structural domains, F(1) containing the extramembraneous catalytic core and F(0) containing the membrane proton channel, linked together by a central stalk and a peripheral stalk. During catalysis, ATP synthesis in the catalytic domain of F(1) is coupled via a rotary mechanism of the central stalk subunits to proton translocation. In terms of biological role, component of the F(0) channel, it forms part of the peripheral stalk, linking F(1) to F(0). This Methylacidiphilum infernorum (isolate V4) (Methylokorus infernorum (strain V4)) protein is ATP synthase subunit b.